A 397-amino-acid chain; its full sequence is Acetate kinase (397 aa).

Position 8 (Asn-8) interacts with Mg(2+). ATP is bound at residue Lys-15. Residue Arg-89 participates in substrate binding. Catalysis depends on Asp-146, which acts as the Proton donor/acceptor. ATP-binding positions include 206-210 (HLGNG), 281-283 (DLR), and 329-333 (GVGEN). Glu-382 is a Mg(2+) binding site.

This sequence belongs to the acetokinase family. As to quaternary structure, homodimer. Requires Mg(2+) as cofactor. The cofactor is Mn(2+).

Its subcellular location is the cytoplasm. It carries out the reaction acetate + ATP = acetyl phosphate + ADP. The protein operates within metabolic intermediate biosynthesis; acetyl-CoA biosynthesis; acetyl-CoA from acetate: step 1/2. Functionally, catalyzes the formation of acetyl phosphate from acetate and ATP. Can also catalyze the reverse reaction. In Bacillus thuringiensis subsp. konkukian (strain 97-27), this protein is Acetate kinase.